The primary structure comprises 473 residues: MASESGKLWGGRFVGTVDPIMEKFNSSITYDRHLWEADVQGSKAYSRGLEKAGLLTKAEMDQILHGLDKVAEEWAQGTFKLNPNDEDIHTANERRLKELIGETAGKLHTGRSRNDQVVTDLRLWMRQNCSMLSALLCELIRTMVDRAEAERDVLFPGYTHLQRAQPIRWSHWILSHAVALTRDSERLLEVRKRINVLPLGSGAIAGNPLGVDRELLRAELDFGAITLNSMDATSERDFVAEFLFWASLCMTHLSRMAEDLILYGTKEFSFVQLSDAYSTGSSLMPQKKNPDSLELIRSKAGRVFGRCAGLLMTLKGLPSTYNKDLQEDKEAVFEVSDTMSAVLQVATGVISTLQIHRENMGRALSPDMLATDLAYYLVRKGMPFRQAHEASGKAVFMAETKGVALNQLSLQELQTISPLFSGDVSHVWDYGHSVEQYEALGGTARSSVDWQIGQLRALLRAQQTESPPHASPK.

Residue Ala2 is modified to N-acetylalanine. An N6-acetyllysine modification is found at Lys7. A 2-(N(omega)-L-arginino)succinate-binding site is contributed by Ser27. Residue Lys69 is modified to N6-acetyllysine. 2-(N(omega)-L-arginino)succinate-binding residues include Asn114 and Thr159. The active-site Proton acceptor is the His160. The active-site Proton donor is the Ser281. The residue at position 288 (Lys288) is an N6-acetyllysine. 2-(N(omega)-L-arginino)succinate-binding residues include Asn289, Tyr321, Gln326, and Lys329.

It belongs to the lyase 1 family. Argininosuccinate lyase subfamily. Homotetramer. Forms tissue-specific complexes with ASS1, SLC7A1, HSP90AA1 and nitric oxide synthase NOS1, NOS2 or NOS3; the complex maintenance is independent of ASL catalytic function. Post-translationally, acetylation modifies enzyme activity in response to alterations of extracellular nutrient availability. Acetylation increased with trichostin A (TSA) or with nicotinamide (NAM). Glucose increases acetylation by about a factor of 3 with decreasing enzyme activity. Acetylation on Lys-288 is decreased on the addition of extra amino acids resulting in activation of enzyme activity.

It carries out the reaction 2-(N(omega)-L-arginino)succinate = fumarate + L-arginine. Its pathway is amino-acid biosynthesis; L-arginine biosynthesis; L-arginine from L-ornithine and carbamoyl phosphate: step 3/3. The protein operates within nitrogen metabolism; urea cycle; L-arginine and fumarate from (N(omega)-L-arginino)succinate: step 1/1. Its activity is regulated as follows. Enzyme activity is regulated by acetylation. In terms of biological role, catalyzes the reversible cleavage of L-argininosuccinate to fumarate and L-arginine, an intermediate step reaction in the urea cycle mostly providing for hepatic nitrogen detoxification into excretable urea as well as de novo L-arginine synthesis in nonhepatic tissues. Essential regulator of intracellular and extracellular L-arginine pools. As part of citrulline-nitric oxide cycle, forms tissue-specific multiprotein complexes with argininosuccinate synthase ASS1, transport protein SLC7A1 and nitric oxide synthase NOS1, NOS2 or NOS3, allowing for cell-autonomous L-arginine synthesis while channeling extracellular L-arginine to nitric oxide synthesis pathway. The protein is Argininosuccinate lyase (ASL) of Bos taurus (Bovine).